The following is a 792-amino-acid chain: Alpha-1,6-mannosylglycoprotein 6-beta-N-acetylglucosaminyltransferase B (792 aa).

At 1–24 the chain is on the cytoplasmic side; the sequence is MITVNPDGKIMVRRCLVTLRPFRL. The chain crosses the membrane as a helical; Signal-anchor for type II membrane protein span at residues 25–45; the sequence is FVLGIGFFTLCFLMTSLGGQF. The Lumenal segment spans residues 46–792; sequence SARRLGDSPF…GQVALCQGCL (747 aa). Asn-127 carries an N-linked (GlcNAc...) asparagine glycan. 9 disulfides stabilise this stretch: Cys-157–Cys-195, Cys-168–Cys-208, Cys-184–Cys-353, Cys-387–Cys-644, Cys-700–Cys-775, Cys-704–Cys-777, Cys-711–Cys-764, Cys-732–Cys-753, and Cys-788–Cys-791.

This sequence belongs to the glycosyltransferase 18 family. Mn(2+) is required as a cofactor. Predominantly expressed in brain. Expressed in all areas of the adult and fetal brain. Also expressed at much lower levels in testis, spleen and thymus.

Its subcellular location is the golgi apparatus membrane. It catalyses the reaction N(4)-{beta-D-GlcNAc-(1-&gt;2)-[beta-D-GlcNAc-(1-&gt;4)]-alpha-D-Man-(1-&gt;3)-[beta-D-GlcNAc-(1-&gt;2)-alpha-D-Man-(1-&gt;6)]-beta-D-Man-(1-&gt;4)-beta-D-GlcNAc-(1-&gt;4)-beta-D-GlcNAc}-L-asparaginyl-[protein] + UDP-N-acetyl-alpha-D-glucosamine = N(4)-{beta-D-GlcNAc-(1-&gt;2)-[beta-D-GlcNAc-(1-&gt;4)]-alpha-D-Man-(1-&gt;3)-[beta-D-GlcNAc-(1-&gt;2)-[beta-D-GlcNAc-(1-&gt;6)]-alpha-D-Man-(1-&gt;6)]-beta-D-Man-(1-&gt;4)-beta-D-GlcNAc-(1-&gt;4)-beta-D-GlcNAc}-L-asparaginyl-[protein] + UDP + H(+). The enzyme catalyses 3-O-[N-acetyl-beta-D-glucosaminyl-(1-&gt;2)-alpha-D-mannosyl]-L-seryl-[protein] + UDP-N-acetyl-alpha-D-glucosamine = O(3)-{N-acetyl-beta-D-glucosaminyl-(1-&gt;2)-[N-acetyl-beta-D-glucosaminyl-(1-&gt;6)]-alpha-D-mannosyl}-L-seryl-[protein] + UDP + H(+). The catalysed reaction is 3-O-[N-acetyl-beta-D-glucosaminyl-(1-&gt;2)-alpha-D-mannosyl]-L-threonyl-[protein] + UDP-N-acetyl-alpha-D-glucosamine = O(3)-{N-acetyl-beta-D-glucosaminyl-(1-&gt;2)-[N-acetyl-beta-D-glucosaminyl-(1-&gt;6)]-alpha-D-mannosyl}-L-threonyl-[protein] + UDP + H(+). It participates in protein modification; protein glycosylation. Functionally, glycosyltransferase that acts on alpha-linked mannose of N-glycans and O-mannosyl glycans. Catalyzes the transfer of N-acetylglucosamine (GlcNAc) to the beta 1-6 linkage of the mannose residue of GlcNAc-beta1,2-Man-alpha on both the alpha1,3- and alpha1,6-linked mannose arms in the core structure of N-glycan. Also acts on the GlcNAc-beta1,2-Man-alpha1-Ser/Thr moiety, forming a 2,6-branched structure in brain O-mannosyl glycan. Plays an active role in modulating integrin and laminin-dependent adhesion and migration of neuronal cells via its activity in the O-mannosyl glycan pathway. This chain is Alpha-1,6-mannosylglycoprotein 6-beta-N-acetylglucosaminyltransferase B (MGAT5B), found in Homo sapiens (Human).